The sequence spans 946 residues: MIGALARKFFGSANDRRVKGYQSRVNAINALEPELIKLSDEELKARTADFKKQLAEGKTLDDLLVPAFATVREAAKRTLGQRHFDVQLIGGMVLHEGDIAEMKTGEGKTLVATLAVYLNALAGKGVHVVTVNDYLARRDSGWMGQIYGFLGMTTGVIVHGLDDAERKTAYACDITYGTNNEYGFDYLRDNMKYRLEDMVQRPHFFAIVDEVDSILIDEARTPLIISGPLDDRSDFYNTIDGFLPKLDKTDYDVDEKQRTVTLTEAGMEKIETLLRDAGQLKGESLYDVENVSVVHHINQALRAHTLFTRDKDYIVRDDEVVIIDEFTGRMMPGRRYSEGLHQALEAKEHVQVQPENQTLASITFQNYFRMYEKLAGMTGTAATEADELFDIYKLEVVEIPTNLSVARLDEDDEVYRTQKEKYAAILAEIERANARLQPVLVGTASIEKSEVLAEFLKSNGYKQIDFGKENALDKLYAAARAGKPSKLFAVLNARFHEQEAYIVAEAGVPGAITIATNMAGRGTDIKLGGSLEMRVPKETAGIEDEAEKARKIEQIKADVERFREIVLKAEEIVEIEPAKGSKPAKTVTKPGGLYIIGSERHESRRIDNQLRGRSGRQGDPGRSKFFLSLEDDLMRIFGSDRLDSMLQRLGLQEGEAIIHPWINKALEKAQQKVEARNFDIRKNLLKFDNVQNDQRKVIFDQRVDLMKDDSVAETVTDMRHAFIDDLVAKHVPEHAYAEQWDVAGLKEELKRVLDLDLPVDDWAKEEGIADEELLNRIENRADEHMAAKVAQWGPDVMRYVEKTILLQTLDHLWREHLIMLDHLRQVIGLRGYGQRDPLQEYKTEAFNLFQEMSAHLREAVTAQLMRVEIVPPEQEAPVLPPMEAHKFDPNTGEDEMALASVTLGAPASDAAQRDPKNPASWGKIGRNEDCPCGSGKKYKHCHGRYA.

Residues glutamine 87, 105–109, and aspartate 524 each bind ATP; that span reads GEGKT. The disordered stretch occupies residues 905–926; sequence APASDAAQRDPKNPASWGKIGR. Zn(2+) contacts are provided by cysteine 930, cysteine 932, cysteine 941, and histidine 942.

This sequence belongs to the SecA family. Monomer and homodimer. Part of the essential Sec protein translocation apparatus which comprises SecA, SecYEG and auxiliary proteins SecDF-YajC and YidC. The cofactor is Zn(2+).

It localises to the cell inner membrane. It is found in the cytoplasm. The enzyme catalyses ATP + H2O + cellular proteinSide 1 = ADP + phosphate + cellular proteinSide 2.. Functionally, part of the Sec protein translocase complex. Interacts with the SecYEG preprotein conducting channel. Has a central role in coupling the hydrolysis of ATP to the transfer of proteins into and across the cell membrane, serving both as a receptor for the preprotein-SecB complex and as an ATP-driven molecular motor driving the stepwise translocation of polypeptide chains across the membrane. The polypeptide is Protein translocase subunit SecA (Bradyrhizobium diazoefficiens (strain JCM 10833 / BCRC 13528 / IAM 13628 / NBRC 14792 / USDA 110)).